A 166-amino-acid chain; its full sequence is Putative pre-16S rRNA nuclease (166 aa).

A disordered region spans residues 1–24 (MPDTAAPTPDRPGPDDPGRGRRLG).

This sequence belongs to the YqgF nuclease family.

It localises to the cytoplasm. Its function is as follows. Could be a nuclease involved in processing of the 5'-end of pre-16S rRNA. The polypeptide is Putative pre-16S rRNA nuclease (Mycobacteroides abscessus (strain ATCC 19977 / DSM 44196 / CCUG 20993 / CIP 104536 / JCM 13569 / NCTC 13031 / TMC 1543 / L948) (Mycobacterium abscessus)).